Consider the following 205-residue polypeptide: ATP-dependent Clp protease proteolytic subunit (205 aa).

The active-site Nucleophile is the Ser101. The active site involves His126.

It belongs to the peptidase S14 family. As to quaternary structure, component of the chloroplastic Clp protease core complex.

The protein resides in the plastid. The protein localises to the chloroplast stroma. The enzyme catalyses Hydrolysis of proteins to small peptides in the presence of ATP and magnesium. alpha-casein is the usual test substrate. In the absence of ATP, only oligopeptides shorter than five residues are hydrolyzed (such as succinyl-Leu-Tyr-|-NHMec, and Leu-Tyr-Leu-|-Tyr-Trp, in which cleavage of the -Tyr-|-Leu- and -Tyr-|-Trp bonds also occurs).. Cleaves peptides in various proteins in a process that requires ATP hydrolysis. Has a chymotrypsin-like activity. Plays a major role in the degradation of misfolded proteins. The sequence is that of ATP-dependent Clp protease proteolytic subunit from Pinus contorta (Shore pine).